The following is a 209-amino-acid chain: Uracil phosphoribosyltransferase (209 aa).

5-phospho-alpha-D-ribose 1-diphosphate is bound by residues arginine 79, arginine 104, and 131–139 (DPMLATGGS). Residues isoleucine 194 and 199 to 201 (GDA) contribute to the uracil site. Aspartate 200 contacts 5-phospho-alpha-D-ribose 1-diphosphate.

This sequence belongs to the UPRTase family. Requires Mg(2+) as cofactor.

The enzyme catalyses UMP + diphosphate = 5-phospho-alpha-D-ribose 1-diphosphate + uracil. It participates in pyrimidine metabolism; UMP biosynthesis via salvage pathway; UMP from uracil: step 1/1. With respect to regulation, allosterically activated by GTP. Its function is as follows. Catalyzes the conversion of uracil and 5-phospho-alpha-D-ribose 1-diphosphate (PRPP) to UMP and diphosphate. In Enterococcus faecalis (strain ATCC 700802 / V583), this protein is Uracil phosphoribosyltransferase.